A 163-amino-acid chain; its full sequence is Putative 4-hydroxy-4-methyl-2-oxoglutarate aldolase (163 aa).

Substrate is bound by residues 76–79 (GDML) and Arg-98. A divalent metal cation is bound at residue Asp-99.

The protein belongs to the class II aldolase/RraA-like family. Homotrimer. A divalent metal cation serves as cofactor.

It carries out the reaction 4-hydroxy-4-methyl-2-oxoglutarate = 2 pyruvate. It catalyses the reaction oxaloacetate + H(+) = pyruvate + CO2. Catalyzes the aldol cleavage of 4-hydroxy-4-methyl-2-oxoglutarate (HMG) into 2 molecules of pyruvate. Also contains a secondary oxaloacetate (OAA) decarboxylase activity due to the common pyruvate enolate transition state formed following C-C bond cleavage in the retro-aldol and decarboxylation reactions. This chain is Putative 4-hydroxy-4-methyl-2-oxoglutarate aldolase, found in Pseudomonas fluorescens (strain ATCC BAA-477 / NRRL B-23932 / Pf-5).